The chain runs to 81 residues: MEGPGAGSGFRKELVSRLLHLHFKDDKTKVSGDALQLMVELLKVFVVEAAVRGVRQAQAEDALRVDVDQLEKVLPQLLLDF.

Methionine 1 bears the N-acetylmethionine mark.

It belongs to the CENP-X/MHF2 family. Heterodimer with CENPX, sometimes called MHF; this interaction stabilizes both partners. MHF heterodimers can assemble to form tetrameric structures. MHF also coassemble with CENPT-CENPW heterodimers at centromeres to form the tetrameric CENP-T-W-S-X complex. Forms a discrete complex with FANCM and CENPX, called FANCM-MHF; this interaction, probably mediated by direct binding between CENPS and FANCM, leads to synergistic activation of double-stranded DNA binding and strongly stimulates FANCM-mediated DNA remodeling. Recruited by FANCM to the Fanconi anemia (FA) core complex, which consists of CENPS, CENPX, FANCA, FANCB, FANCC, FANCE, FANCF, FANCG, FANCL, FANCM, FAAP24 and FAAP100. The FA core complex associates with Bloom syndrome (BLM) complex, which consists of at least BLM, DNA topoisomerase 3-alpha (TOP3A), RMI1/BLAP75, RPA1/RPA70 and RPA2/RPA32. The super complex between FA and BLM is called BRAFT.

It localises to the nucleus. Its subcellular location is the chromosome. The protein resides in the centromere. It is found in the kinetochore. Functionally, DNA-binding component of the Fanconi anemia (FA) core complex. Required for the normal activation of the FA pathway, leading to monoubiquitination of the FANCI-FANCD2 complex in response to DNA damage, cellular resistance to DNA cross-linking drugs, and prevention of chromosomal breakage. In complex with CENPS (MHF heterodimer), crucial cofactor for FANCM in both binding and ATP-dependent remodeling of DNA. Stabilizes FANCM. In complex with CENPS and FANCM (but not other FANC proteins), rapidly recruited to blocked forks and promotes gene conversion at blocked replication forks. In complex with CENPS, CENPT and CENPW (CENP-T-W-S-X heterotetramer), involved in the formation of a functional kinetochore outer plate, which is essential for kinetochore-microtubule attachment and faithful mitotic progression. As a component of MHF and CENP-T-W-S-X complexes, binds DNA and bends it to form a nucleosome-like structure. DNA-binding function is fulfilled in the presence of CENPS, with the following preference for DNA substates: Holliday junction &gt; double-stranded &gt; splay arm &gt; single-stranded. Does not bind DNA on its own. This is Centromere protein X (CENPX) from Pongo abelii (Sumatran orangutan).